The following is a 34-amino-acid chain: Small ribosomal subunit protein uS2c (34 aa).

It belongs to the universal ribosomal protein uS2 family.

Its subcellular location is the plastid. It is found in the chloroplast. This is Small ribosomal subunit protein uS2c (rps2) from Ochrosphaera neapolitana.